A 321-amino-acid polypeptide reads, in one-letter code: MFLSSRMITSVSPSTSTNSSFLLTGFSGMEQQYPWLSIPFSSIYAMVLLGNCMVLHVIWTEPSLHQPMFYFLSMLALTDLCMGLSTVYTVLGILWGIIREISLDSCIAQSYFIHGLSFMESSVLLTMAFDRYIAICNPLRYSSILTNSRIIKIGLTIIGRSFFFITPPIICLKFFNYCHFHILSHSFCLHQDLLRLACSDIRFNSYYALMLVICILLLDAILILFSYILILKSVLAVASQEERHKLFQTCISHICAVLVFYIPIISLTMVHRFGKHLSPVAHVLIGNIYILFPPLMNPIIYSVKTQQIHTRMLRLFSLKRY.

Residues 1–34 are Extracellular-facing; the sequence is MFLSSRMITSVSPSTSTNSSFLLTGFSGMEQQYP. A glycan (N-linked (GlcNAc...) asparagine) is linked at Asn-18. Residues 35–55 form a helical membrane-spanning segment; that stretch reads WLSIPFSSIYAMVLLGNCMVL. Topologically, residues 56-63 are cytoplasmic; the sequence is HVIWTEPS. A helical transmembrane segment spans residues 64–84; that stretch reads LHQPMFYFLSMLALTDLCMGL. The Extracellular portion of the chain corresponds to 85–108; that stretch reads STVYTVLGILWGIIREISLDSCIA. Cys-106 and Cys-188 form a disulfide bridge. Residues 109 to 129 form a helical membrane-spanning segment; it reads QSYFIHGLSFMESSVLLTMAF. Residues 130-148 lie on the Cytoplasmic side of the membrane; it reads DRYIAICNPLRYSSILTNS. A helical transmembrane segment spans residues 149–169; the sequence is RIIKIGLTIIGRSFFFITPPI. The Extracellular segment spans residues 170 to 205; the sequence is ICLKFFNYCHFHILSHSFCLHQDLLRLACSDIRFNS. A helical transmembrane segment spans residues 206–226; that stretch reads YYALMLVICILLLDAILILFS. The Cytoplasmic portion of the chain corresponds to 227-246; the sequence is YILILKSVLAVASQEERHKL. The helical transmembrane segment at 247-267 threads the bilayer; the sequence is FQTCISHICAVLVFYIPIISL. Residues 268–282 lie on the Extracellular side of the membrane; the sequence is TMVHRFGKHLSPVAH. A helical membrane pass occupies residues 283–303; sequence VLIGNIYILFPPLMNPIIYSV. Residues 304–321 are Cytoplasmic-facing; that stretch reads KTQQIHTRMLRLFSLKRY.

Belongs to the G-protein coupled receptor 1 family.

Its subcellular location is the cell membrane. Odorant receptor. This Homo sapiens (Human) protein is Olfactory receptor 51V1 (OR51V1).